The following is a 360-amino-acid chain: Homeobox protein ceh-60 (360 aa).

The segment at 1-82 (MDNLIKQLQM…ENPTFPLEEV (82 aa)) is PBC-A. Residues 1-179 (MDNLIKQLQM…ILVLRREIEQ (179 aa)) form the PBC domain. The interval 85–179 (EKDEEWQPLE…ILVLRREIEQ (95 aa)) is PBC-B. The homeobox DNA-binding region spans 180 to 242 (QGRKRRNFDK…NQRIRTKQQA (63 aa)).

This sequence belongs to the TALE/PBX homeobox family. As to quaternary structure, forms a heterodimer with homeobox unc-62. Interacts with pqm-1.

The protein localises to the nucleus. In terms of biological role, probable transcription regulator which binds to DNA, repressing genes involved in longevity and stress, while activating genes involved in reproduction, such as the vitellogenins. Associates with homeobox unc-62 to regulate gene expression, including repression of genes involved in innate immunity. Required for intestinal expression of vitellogenin genes. Negatively modulates longevity, probably independently of effects on vitellogenesis. Involved in lipid homeostasis, contributing to the reallocation of intestinal lipids to the germline and to the formation of the cuticle. Associates with transcriptional regulator pqm-1 at the daf-16 associated element within the promoters of stress-responsive genes to regulate expression. The chain is Homeobox protein ceh-60 from Caenorhabditis elegans.